The chain runs to 448 residues: Chromogranin-A (448 aa).

Residues 1–18 form the signal peptide; sequence MRSAVVLALLLCAGQVIA. Cys35 and Cys56 are oxidised to a cystine. The disordered stretch occupies residues 116-251; sequence LKEVTEEALS…AFNPHPSLSY (136 aa). Basic and acidic residues-rich tracts occupy residues 129–139 and 158–175; these read AEARGDSKEVE and QESRVEDAQAPGEEKEAI. Phosphoserine is present on Ser197. The segment covering 205–222 has biased composition (basic and acidic residues); sequence VDREKGLGAERGQQAKRE. The segment covering 223-238 has biased composition (acidic residues); the sequence is EEEDEAGEKADAEEEG. Ser258 and Ser288 each carry phosphoserine. The interval 263–429 is disordered; sequence LVVDGARKTG…PEDQELESLS (167 aa). The residue at position 308 (Gly308) is a Glycine amide. Residues 310–350 are compositionally biased toward basic and acidic residues; it reads KSRELEQEKEQERLSKEWEDAKRWSKMDQLAKELTAEKRLE. Phosphoserine occurs at positions 311, 324, and 362. Residue Met363 is modified to Methionine sulfoxide. Phosphoserine occurs at positions 389, 393, 415, and 429. Residues 405–422 are compositionally biased toward basic and acidic residues; sequence YPEEKKEEEGSANRRPED. Residue Ser415 is glycosylated (O-linked (Xyl...) (chondroitin sulfate) serine).

This sequence belongs to the chromogranin/secretogranin protein family. Self-interacts; self-assembly is promoted in vitro by chondroitin sulfate attachment which occurs at mildly acidic pH conditions. Interacts with SCG3. Interacts with ITPR1 in the secretory granules. O-glycosylated; contains chondroitin sulfate (CS). CS attachment is pH-dependent, being observed at mildly acidic conditions of pH 5 but not at neutral pH, and promotes self-assembly in vitro. In terms of tissue distribution, highly expressed in adrenal medulla and pituitary gland. Weaker expression detected in cerebrum, cerebellum, spinal cord, liver, thyroid gland, striated muscle, lung, spleen, kidney, parotid gland, and sublingual gland.

It is found in the secreted. Its subcellular location is the cytoplasmic vesicle. The protein resides in the secretory vesicle. It localises to the neuronal dense core vesicle. Its function is as follows. Strongly inhibits glucose induced insulin release from the pancreas. In terms of biological role, inhibits catecholamine release from chromaffin cells and noradrenergic neurons by acting as a non-competitive nicotinic cholinergic antagonist. Can induce mast cell migration, degranulation and production of cytokines and chemokines. Regulates granule biogenesis in endocrine cells by up-regulating the transcription of protease nexin 1 (SERPINE2) via a cAMP-PKA-SP1 pathway. This leads to inhibition of granule protein degradation in the Golgi complex which in turn promotes granule formation. The sequence is that of Chromogranin-A (CHGA) from Equus caballus (Horse).